The following is a 232-amino-acid chain: Ribosomal RNA small subunit methyltransferase G (232 aa).

Residues 1-24 are disordered; the sequence is MVDTALHPIPGRRTPPHPRSTLPL. S-adenosyl-L-methionine-binding positions include G91, L96, 142 to 143, and R160; that span reads AE.

It belongs to the methyltransferase superfamily. RNA methyltransferase RsmG family.

The protein localises to the cytoplasm. Functionally, specifically methylates the N7 position of guanine in position 518 of 16S rRNA. The chain is Ribosomal RNA small subunit methyltransferase G from Corynebacterium efficiens (strain DSM 44549 / YS-314 / AJ 12310 / JCM 11189 / NBRC 100395).